The following is a 24-amino-acid chain: Transaldolase (24 aa).

It belongs to the transaldolase family.

Its subcellular location is the cytoplasm. The catalysed reaction is D-sedoheptulose 7-phosphate + D-glyceraldehyde 3-phosphate = D-erythrose 4-phosphate + beta-D-fructose 6-phosphate. The protein operates within carbohydrate degradation; pentose phosphate pathway; D-glyceraldehyde 3-phosphate and beta-D-fructose 6-phosphate from D-ribose 5-phosphate and D-xylulose 5-phosphate (non-oxidative stage): step 2/3. In terms of biological role, transaldolase is important for the balance of metabolites in the pentose-phosphate pathway. In Capsicum annuum var. annuum (Red pepper), this protein is Transaldolase.